We begin with the raw amino-acid sequence, 1099 residues long: R3H domain-containing protein 1 (1099 aa).

The disordered stretch occupies residues 111–146; it reads SFEKEEKPSKDEAEKEKASDKLPRKMLSRDSSQEYT. Residues 112-142 show a composition bias toward basic and acidic residues; it reads FEKEEKPSKDEAEKEKASDKLPRKMLSRDSS. The region spanning 168–231 is the R3H domain; that stretch reads RMMLLKLEQE…SVIVNKTSNT (64 aa). Phosphoserine occurs at positions 187 and 262. The SUZ domain occupies 232–302; sequence RIPDQKFNEH…ARDRIFSQDS (71 aa). The disordered stretch occupies residues 267-287; the sequence is DNQMRIRLKDDRRSKSIEERE. S302 is modified (phosphoserine). The tract at residues 331-370 is disordered; the sequence is RVNKDASGRSTNSHQSSTENELKYSEPRPWSSTDSDSSLR. 2 stretches are compositionally biased toward polar residues: residues 338-349 and 360-370; these read GRSTNSHQSSTE and WSSTDSDSSLR. Residues S380, S381, and S393 each carry the phosphoserine modification. Disordered stretches follow at residues 387–439, 490–537, 583–625, and 797–825; these read VLTR…SSHG, QTGQ…AANH, YIMT…HPVS, and EQVQFPRTTSPCSSQQLQGHQCTAGPPPP. Positions 391–422 are enriched in low complexity; that stretch reads GDSSGSSKSIGRLSKTGSESSGSVGSSTGSLS. Composition is skewed to pro residues over residues 519-532 and 588-611; these read PGPPQPPLPAPPQQ and APPPHPPPPPPPPPPPPPLPPGQP. Residues 797–817 show a composition bias toward polar residues; that stretch reads EQVQFPRTTSPCSSQQLQGHQ. R929 carries the asymmetric dimethylarginine; alternate modification. Residue R929 is modified to Omega-N-methylarginine; alternate. A disordered region spans residues 941 to 977; it reads PPAVLHGHIPNQQGQPGSRHGNRGRRQAKKAASTDLG. Residues 960 to 969 are compositionally biased toward basic residues; that stretch reads HGNRGRRQAK. Position 973 is a phosphoserine (S973).

In Homo sapiens (Human), this protein is R3H domain-containing protein 1 (R3HDM1).